The primary structure comprises 235 residues: Phosphoribosylaminoimidazole-succinocarboxamide synthase (235 aa).

The protein belongs to the SAICAR synthetase family.

The catalysed reaction is 5-amino-1-(5-phospho-D-ribosyl)imidazole-4-carboxylate + L-aspartate + ATP = (2S)-2-[5-amino-1-(5-phospho-beta-D-ribosyl)imidazole-4-carboxamido]succinate + ADP + phosphate + 2 H(+). It participates in purine metabolism; IMP biosynthesis via de novo pathway; 5-amino-1-(5-phospho-D-ribosyl)imidazole-4-carboxamide from 5-amino-1-(5-phospho-D-ribosyl)imidazole-4-carboxylate: step 1/2. This Chlorobaculum parvum (strain DSM 263 / NCIMB 8327) (Chlorobium vibrioforme subsp. thiosulfatophilum) protein is Phosphoribosylaminoimidazole-succinocarboxamide synthase.